We begin with the raw amino-acid sequence, 184 residues long: Gremlin-1 (184 aa).

An N-terminal signal peptide occupies residues 1 to 24; the sequence is MVRTLYAIGAVFLLTGFLLPTAEG. Residues 24 to 77 are disordered; that stretch reads GRKRNRGSQGAIPPPDKDQPNDSEQMQTQQQSGSRHRERGKGTSMPAEEVLESS. Residue Asn-44 is glycosylated (N-linked (GlcNAc...) asparagine). The span at 45 to 56 shows a compositional bias: polar residues; that stretch reads DSEQMQTQQQSG. Disulfide bonds link Cys-94–Cys-144, Cys-108–Cys-158, Cys-118–Cys-176, and Cys-122–Cys-178. Residues 94–184 enclose the CTCK domain; sequence CKTQPLKQTI…ECRCISIDLD (91 aa).

It belongs to the DAN family.

Its subcellular location is the secreted. In terms of biological role, cytokine that may play a role in the development of the medial pallium and during optic nerve and pecten development by modulating BMP signaling. The protein is Gremlin-1 (GREM1) of Gallus gallus (Chicken).